The sequence spans 235 residues: Small ribosomal subunit protein uS2 (235 aa).

Belongs to the universal ribosomal protein uS2 family.

In Synechococcus sp. (strain RCC307), this protein is Small ribosomal subunit protein uS2.